Reading from the N-terminus, the 517-residue chain is Variant surface glycoprotein MVAT5 (517 aa).

A signal peptide spans 1-21 (MIGKAFIILSLLNELPTPTAA). 2 cysteine pairs are disulfide-bonded: C417–C430 and C426–C443. An N-linked (GlcNAc...) asparagine glycan is attached at N435. Residues 454–470 (QAAQTAGAGEGAAGTTT) show a composition bias toward low complexity. Residues 454 to 487 (QAAQTAGAGEGAAGTTTDKCKDKKKDDCKSPDCK) form a disordered region. Positions 471–487 (DKCKDKKKDDCKSPDCK) are enriched in basic and acidic residues. D495 carries the GPI-anchor amidated aspartate lipid modification. The propeptide at 496 to 517 (SSILLNKQFALMVSAAFVALLF) is removed in mature form.

Its subcellular location is the cell membrane. Functionally, VSG forms a coat on the surface of the parasite. The trypanosome evades the immune response of the host by expressing a series of antigenically distinct VSGs from an estimated 1000 VSG genes. The protein is Variant surface glycoprotein MVAT5 of Trypanosoma brucei rhodesiense.